Reading from the N-terminus, the 490-residue chain is Betaine aldehyde dehydrogenase (490 aa).

K(+) contacts are provided by Thr-26 and Asp-93. NAD(+) is bound at residue 150 to 152 (GAW). Lys-162 serves as the catalytic Charge relay system. 176-179 (KPSE) is a binding site for NAD(+). K(+) is bound at residue Val-180. An NAD(+)-binding site is contributed by 230–233 (GVAT). Leu-246 serves as a coordination point for K(+). Glu-252 acts as the Proton acceptor in catalysis. Residues Gly-254, Cys-286, and Glu-387 each coordinate NAD(+). The active-site Nucleophile is Cys-286. Cys-286 carries the post-translational modification Cysteine sulfenic acid (-SOH). K(+) contacts are provided by Lys-457 and Gly-460. The active-site Charge relay system is the Glu-464.

This sequence belongs to the aldehyde dehydrogenase family. In terms of assembly, dimer of dimers. K(+) is required as a cofactor.

The catalysed reaction is betaine aldehyde + NAD(+) + H2O = glycine betaine + NADH + 2 H(+). Its pathway is amine and polyamine biosynthesis; betaine biosynthesis via choline pathway; betaine from betaine aldehyde: step 1/1. Involved in the biosynthesis of the osmoprotectant glycine betaine. Catalyzes the irreversible oxidation of betaine aldehyde to the corresponding acid. This Stenotrophomonas maltophilia (strain R551-3) protein is Betaine aldehyde dehydrogenase.